Here is a 1220-residue protein sequence, read N- to C-terminus: Plasma membrane calcium-transporting ATPase 1 (1220 aa).

G2 carries the N-acetylglycine modification. The Cytoplasmic portion of the chain corresponds to 2–105; sequence GDMANNSVAY…KTFLQLVWEA (104 aa). A phosphoserine mark is found at S8 and S17. A helical membrane pass occupies residues 106–126; that stretch reads LQDVTLIILEIAAIVSLGLSF. The Extracellular portion of the chain corresponds to 127–154; that stretch reads YQPPEGDNALCGEVSVGEEEGEGETGWI. A helical transmembrane segment spans residues 155 to 175; that stretch reads EGAAILLSVVCVVLVTAFNDW. Topologically, residues 176–366 are cytoplasmic; that stretch reads SKEKQFRGLQ…KEKSVLQGKL (191 aa). The disordered stretch occupies residues 297–356; that stretch reads EEEKKDEKKKEKKNKKQDGAIENRNKAKAQDGAAMEMQPLKSEEGGDGDEKDKKKANLPK. Basic and acidic residues-rich tracts occupy residues 312–325 and 337–356; these read KQDG…KAKA and KSEE…NLPK. S338 is subject to Phosphoserine. The helical transmembrane segment at 367–386 threads the bilayer; that stretch reads TKLAVQIGKAGLLMSAITVI. Topologically, residues 387–418 are extracellular; the sequence is ILVLYFVIDTFWVQKRPWLAECTPIYIQYFVK. Residues 419–439 traverse the membrane as a helical segment; the sequence is FFIIGVTVLVVAVPEGLPLAV. At 440-855 the chain is on the cytoplasmic side; it reads TISLAYSVKK…RNVYDSISKF (416 aa). The 4-aspartylphosphate intermediate role is filled by D475. Mg(2+)-binding residues include D475, T477, and D797. Residues 856–876 form a helical membrane-spanning segment; sequence LQFQLTVNVVAVIVAFTGACI. The Extracellular portion of the chain corresponds to 877–882; the sequence is TQDSPL. A helical membrane pass occupies residues 883-903; it reads KAVQMLWVNLIMDTLASLALA. Over 904 to 927 the chain is Cytoplasmic; sequence TEPPTESLLLRKPYGRNKPLISRT. A helical transmembrane segment spans residues 928–948; the sequence is MMKNILGHAFYQLVVVFTLLF. At 949-971 the chain is on the extracellular side; that stretch reads AGEKFFDIDSGRNAPLHAPPSEH. The chain crosses the membrane as a helical span at residues 972-991; the sequence is YTIVFNTFVLMQLFNEINAR. At 992–1005 the chain is on the cytoplasmic side; sequence KIHGERNVFEGIFN. Residues 1006–1027 traverse the membrane as a helical segment; the sequence is NAIFCTIVLGTFVVQIIIVQFG. The Extracellular segment spans residues 1028–1039; that stretch reads GKPFSCSELSIE. The chain crosses the membrane as a helical span at residues 1040–1060; that stretch reads QWLWSIFLGMGTLLWGQLIST. Residues 1061–1220 lie on the Cytoplasmic side of the membrane; it reads IPTSRLKFLK…SPLHSLETSL (160 aa). The segment at 1100–1117 is calmodulin-binding subdomain A; it reads LRRGQILWFRGLNRIQTQ. T1116 is subject to Phosphothreonine; by PKC. The tract at residues 1118-1220 is required for basolateral membrane targeting; that stretch reads IRVVNAFRSS…SPLHSLETSL (103 aa). A phosphoserine mark is found at S1140 and S1155. The tract at residues 1160 to 1220 is disordered; the sequence is PLIDDTDAED…SPLHSLETSL (61 aa). T1165 carries the phosphothreonine modification. A phosphoserine mark is found at S1178 and S1182. Residues 1200-1220 show a composition bias toward polar residues; that stretch reads MNKSATSSSPGSPLHSLETSL.

The protein belongs to the cation transport ATPase (P-type) (TC 3.A.3) family. Type IIB subfamily. In terms of assembly, monomer. Dimer. Oligomer. Calmodulin binding. Interacts with PDZD11. Interacts with SLC35G1 and STIM1. Interacts with YWHAE; interacts with the monomeric and dimeric forms of the YWHAE but prefer the monomer form; this interaction inhibits calcium-transporting ATPase activity. Interacts with NPTN; this interaction stabilizes ATP2B1 and increases ATPase activity; this interaction controls T cell calcium homeostasis following T cell activation. Interacts with EPB41; regulates small intestinal calcium absorption through regulation of membrane expression of ATP2B1. As to expression, expressed in the retina, with strongest expression in the outer plexiform layer and lower expression levels in the inner nuclear layer and the inner plexiform layer. Specifically expressed in the following retinal cell types: photoreceptor cells, cone bipolar cells and horizontal cells. Expressed in osteoclasts (at protein level). Expressed at highest levels in brain, intestine, kidney, and stomach, and at lower levels in liver, lung, aorta, portal vein, urinary bladder, diaphragm, seminal vesicles and testes. Expressed in small intestinal epithelium.

The protein resides in the cell membrane. It is found in the basolateral cell membrane. It localises to the synapse. The protein localises to the presynaptic cell membrane. Its subcellular location is the cytoplasmic vesicle. The protein resides in the secretory vesicle. It is found in the synaptic vesicle membrane. The catalysed reaction is Ca(2+)(in) + ATP + H2O = Ca(2+)(out) + ADP + phosphate + H(+). Its function is as follows. Catalyzes the hydrolysis of ATP coupled with the transport of calcium from the cytoplasm to the extracellular space thereby maintaining intracellular calcium homeostasis. Plays a role in blood pressure regulation through regulation of intracellular calcium concentration and nitric oxide production leading to regulation of vascular smooth muscle cells vasoconstriction. Positively regulates bone mineralization through absorption of calcium from the intestine. Plays dual roles in osteoclast differentiation and survival by regulating RANKL-induced calcium oscillations in preosteoclasts and mediating calcium extrusion in mature osteoclasts. Regulates insulin sensitivity through calcium/calmodulin signaling pathway by regulating AKT1 activation and NOS3 activation in endothelial cells. May play a role in synaptic transmission by modulating calcium and proton dynamics at the synaptic vesicles. This Mus musculus (Mouse) protein is Plasma membrane calcium-transporting ATPase 1.